The chain runs to 83 residues: Protein WFDC9 (83 aa).

Residues 1–24 (MKPWIIVLTVSAHGILVFLHVLGS) form the signal peptide.

It localises to the secreted. The protein is Protein WFDC9 (Wfdc9) of Mus musculus (Mouse).